A 374-amino-acid chain; its full sequence is PqqA peptide cyclase (374 aa).

Positions 7–222 constitute a Radical SAM core domain; it reads VTPPLWLLAE…VADYRQRMGA (216 aa). [4Fe-4S] cluster contacts are provided by C21, C25, and C28.

Belongs to the radical SAM superfamily. PqqE family. Interacts with PqqD. The interaction is necessary for activity of PqqE. [4Fe-4S] cluster is required as a cofactor.

It catalyses the reaction [PQQ precursor protein] + S-adenosyl-L-methionine = E-Y cross-linked-[PQQ precursor protein] + 5'-deoxyadenosine + L-methionine + H(+). It participates in cofactor biosynthesis; pyrroloquinoline quinone biosynthesis. Its function is as follows. Catalyzes the cross-linking of a glutamate residue and a tyrosine residue in the PqqA protein as part of the biosynthesis of pyrroloquinoline quinone (PQQ). The chain is PqqA peptide cyclase from Kluyvera intermedia (Enterobacter intermedius).